The primary structure comprises 224 residues: Flagellar L-ring protein (224 aa).

The first 15 residues, 1–15 (MIKYIALASVVLLVG), serve as a signal peptide directing secretion. The N-palmitoyl cysteine moiety is linked to residue cysteine 16. Cysteine 16 carries S-diacylglycerol cysteine lipidation.

It belongs to the FlgH family. As to quaternary structure, the basal body constitutes a major portion of the flagellar organelle and consists of four rings (L,P,S, and M) mounted on a central rod.

The protein resides in the cell outer membrane. The protein localises to the bacterial flagellum basal body. Its function is as follows. Assembles around the rod to form the L-ring and probably protects the motor/basal body from shearing forces during rotation. The protein is Flagellar L-ring protein of Shewanella frigidimarina (strain NCIMB 400).